The primary structure comprises 37 residues: Large ribosomal subunit protein bL36c (37 aa).

It belongs to the bacterial ribosomal protein bL36 family.

The protein localises to the plastid. The protein resides in the chloroplast. In Cyanidioschyzon merolae (strain NIES-3377 / 10D) (Unicellular red alga), this protein is Large ribosomal subunit protein bL36c.